The sequence spans 85 residues: Putative regulatory protein Dtur_1444 (85 aa).

This sequence belongs to the RemA family.

The polypeptide is Putative regulatory protein Dtur_1444 (Dictyoglomus turgidum (strain DSM 6724 / Z-1310)).